The chain runs to 353 residues: Photosystem II protein D1 (353 aa).

T2 bears the N-acetylthreonine mark. The residue at position 2 (T2) is a Phosphothreonine. 3 consecutive transmembrane segments (helical) span residues 29–46 (YIGW…TATS), 118–133 (HFLL…EWEL), and 142–156 (WIAV…AATA). Residue H118 participates in chlorophyll a binding. Residue Y126 participates in pheophytin a binding. Residues D170 and E189 each coordinate [CaMn4O5] cluster. The chain crosses the membrane as a helical span at residues 197-218 (FHMLGVAGVFGGSLFSAMHGSL). Chlorophyll a is bound at residue H198. Residues H215 and 264-265 (SF) each bind a quinone. Residue H215 participates in Fe cation binding. Position 272 (H272) interacts with Fe cation. A helical transmembrane segment spans residues 274–288 (FLAAWPVVGIWFTAL). [CaMn4O5] cluster contacts are provided by H332, E333, D342, and A344. The propeptide occupies 345–353 (AVEVPSTNG).

It belongs to the reaction center PufL/M/PsbA/D family. PSII is composed of 1 copy each of membrane proteins PsbA, PsbB, PsbC, PsbD, PsbE, PsbF, PsbH, PsbI, PsbJ, PsbK, PsbL, PsbM, PsbT, PsbX, PsbY, PsbZ, Psb30/Ycf12, at least 3 peripheral proteins of the oxygen-evolving complex and a large number of cofactors. It forms dimeric complexes. Requires The D1/D2 heterodimer binds P680, chlorophylls that are the primary electron donor of PSII, and subsequent electron acceptors. It shares a non-heme iron and each subunit binds pheophytin, quinone, additional chlorophylls, carotenoids and lipids. D1 provides most of the ligands for the Mn4-Ca-O5 cluster of the oxygen-evolving complex (OEC). There is also a Cl(-1) ion associated with D1 and D2, which is required for oxygen evolution. The PSII complex binds additional chlorophylls, carotenoids and specific lipids. as cofactor. In terms of processing, tyr-161 forms a radical intermediate that is referred to as redox-active TyrZ, YZ or Y-Z. C-terminally processed by CTPA; processing is essential to allow assembly of the oxygen-evolving complex and thus photosynthetic growth.

Its subcellular location is the plastid. It localises to the chloroplast thylakoid membrane. The catalysed reaction is 2 a plastoquinone + 4 hnu + 2 H2O = 2 a plastoquinol + O2. Photosystem II (PSII) is a light-driven water:plastoquinone oxidoreductase that uses light energy to abstract electrons from H(2)O, generating O(2) and a proton gradient subsequently used for ATP formation. It consists of a core antenna complex that captures photons, and an electron transfer chain that converts photonic excitation into a charge separation. The D1/D2 (PsbA/PsbD) reaction center heterodimer binds P680, the primary electron donor of PSII as well as several subsequent electron acceptors. This Eucalyptus globulus subsp. globulus (Tasmanian blue gum) protein is Photosystem II protein D1.